Consider the following 360-residue polypeptide: Glyceraldehyde-3-phosphate dehydrogenase (360 aa).

NAD(+)-binding positions include 13-14, aspartate 35, and arginine 82; that span reads RI. Residues 153–155, threonine 184, 213–214, and arginine 236 each bind D-glyceraldehyde 3-phosphate; these read SCT and TG. Cysteine 154 (nucleophile) is an active-site residue. Asparagine 318 provides a ligand contact to NAD(+).

Belongs to the glyceraldehyde-3-phosphate dehydrogenase family. In terms of assembly, homotetramer.

The enzyme catalyses D-glyceraldehyde 3-phosphate + phosphate + NAD(+) = (2R)-3-phospho-glyceroyl phosphate + NADH + H(+). It functions in the pathway carbohydrate degradation; glycolysis; pyruvate from D-glyceraldehyde 3-phosphate: step 1/5. Functionally, key enzyme in glycolysis that catalyzes the first step of the pathway by converting D-glyceraldehyde 3-phosphate (G3P) into 3-phospho-D-glyceroyl phosphate. Essential for the maintenance of cellular ATP levels and carbohydrate metabolism. The polypeptide is Glyceraldehyde-3-phosphate dehydrogenase (Atriplex nummularia (Old man saltbush)).